A 375-amino-acid polypeptide reads, in one-letter code: PqqA peptide cyclase (375 aa).

Residues 18–235 (ILPPMAMLAE…EAREKYQGIL (218 aa)) enclose the Radical SAM core domain. [4Fe-4S] cluster contacts are provided by C32, C36, and C39.

It belongs to the radical SAM superfamily. PqqE family. Interacts with PqqD. The interaction is necessary for activity of PqqE. It depends on [4Fe-4S] cluster as a cofactor.

It carries out the reaction [PQQ precursor protein] + S-adenosyl-L-methionine = E-Y cross-linked-[PQQ precursor protein] + 5'-deoxyadenosine + L-methionine + H(+). Its pathway is cofactor biosynthesis; pyrroloquinoline quinone biosynthesis. Functionally, catalyzes the cross-linking of a glutamate residue and a tyrosine residue in the PqqA protein as part of the biosynthesis of pyrroloquinoline quinone (PQQ). This is PqqA peptide cyclase from Rhizobium meliloti (strain 1021) (Ensifer meliloti).